The primary structure comprises 300 residues: Regulatory protein NocR (300 aa).

Positions Met1 to Thr59 constitute an HTH lysR-type domain. Positions Met19–Arg38 form a DNA-binding region, H-T-H motif.

The protein belongs to the LysR transcriptional regulatory family.

Positive regulatory protein for the noc operon involved in nopaline catabolism and uptake. This is Regulatory protein NocR (nocR) from Agrobacterium fabrum (strain C58 / ATCC 33970) (Agrobacterium tumefaciens (strain C58)).